The following is a 318-amino-acid chain: TPR repeat-containing protein MJ0940 (318 aa).

TPR repeat units follow at residues 17-50 (SLTY…NPDF), 84-117 (PVAY…EEKF), 119-151 (TAFF…APNF), 152-185 (IPAY…KEND), 186-219 (TNAI…LNVT), 221-254 (IEVI…RPDD), 255-288 (ASLW…MPHH), and 289-318 (TKAL…ALDR).

In Methanocaldococcus jannaschii (strain ATCC 43067 / DSM 2661 / JAL-1 / JCM 10045 / NBRC 100440) (Methanococcus jannaschii), this protein is TPR repeat-containing protein MJ0940.